Consider the following 439-residue polypeptide: Gnt-II system L-idonate transporter (439 aa).

Residues 1 to 11 (MPLIIIAAGVA) lie on the Periplasmic side of the membrane. Residues 12 to 34 (LLLILMIGFKVNGFIALVLVAAV) form a helical membrane-spanning segment. Residues 35–53 (VGFAEGMDAQAVLHSIQNG) are Cytoplasmic-facing. Residues 54–76 (IGSTLGGLAMILGFGAMLGKLIS) form a helical membrane-spanning segment. Topologically, residues 77 to 96 (DTGAAQRIATTLIATFGKKR) are periplasmic. The helical transmembrane segment at 97-114 (VQWALVITGLVVGLAMFF) threads the bilayer. Residues 115 to 118 (EVGF) lie on the Cytoplasmic side of the membrane. The chain crosses the membrane as a helical span at residues 119–141 (VLLLPLVFTIVASSGLPLLYVGV). Residues 142 to 170 (PMVAALSVTHCFLPPHPGPTAIATIFEAN) are Periplasmic-facing. The chain crosses the membrane as a helical span at residues 171–193 (LGTTLLYGFIITIPTVIVAGPLF). Over 194–218 (SKLLTRFEKAPPEGLFNPHLFSEEE) the chain is Cytoplasmic. A helical transmembrane segment spans residues 219–241 (MPSFWNSIFAAVIPVILMAIAAV). Residues 242-253 (CEITLPKTNTVR) are Periplasmic-facing. Residues 254–276 (LFFEFVGNPAVALFIAIVIAIFT) form a helical membrane-spanning segment. Residues 277-290 (LGRRNGRTIEQIMD) are Cytoplasmic-facing. Residues 291–310 (IIGDSIGAIAMIVFIIAGGG) form a helical membrane-spanning segment. The Periplasmic segment spans residues 311–322 (AFKQVLVDSGVG). A helical membrane pass occupies residues 323–345 (HYISHLMTGTTLSPLLMCWTVAA). The Cytoplasmic portion of the chain corresponds to 346-348 (LLR). Residues 349–371 (IALGSATVAAITTAGVVLPIINV) traverse the membrane as a helical segment. At 372–377 (THADPA) the chain is on the periplasmic side. Residues 378–400 (LMVLATGAGSVIASHVNDPGFWL) traverse the membrane as a helical segment. Residues 401 to 414 (FKGYFNLTVGETLR) are Cytoplasmic-facing. The chain crosses the membrane as a helical span at residues 415–437 (TWTVMETLISIMGLLGVLAINAV). Topologically, residues 438-439 (LH) are periplasmic.

It belongs to the GntP permease family.

It localises to the cell inner membrane. The enzyme catalyses L-idonate(in) + H(+)(in) = L-idonate(out) + H(+)(out). It catalyses the reaction D-gluconate(in) + H(+)(in) = D-gluconate(out) + H(+)(out). The catalysed reaction is 5-dehydro-D-gluconate(in) + H(+)(in) = 5-dehydro-D-gluconate(out) + H(+)(out). It participates in carbohydrate acid metabolism; L-idonate degradation. In terms of biological role, transporter which is probably involved in L-idonate metabolism. Transports L-idonate from the periplasm across the inner membrane. Can also transport D-gluconate and 5-keto-D-gluconate. It has been reported that gluconate uptake probably occurs via a proton-symport mechanism in E.coli. This chain is Gnt-II system L-idonate transporter, found in Escherichia coli (strain K12).